A 358-amino-acid polypeptide reads, in one-letter code: Molybdenum import ATP-binding protein ModC (358 aa).

One can recognise an ABC transporter domain in the interval 3-228 (INVKQKLGDL…LEMRPWLPAK (226 aa)). 30 to 37 (GRSGAGKT) contributes to the ATP binding site. In terms of domain architecture, Mop spans 289-356 (QTSIRNVLLA…IKGVSVTKDD (68 aa)).

The protein belongs to the ABC transporter superfamily. Molybdate importer (TC 3.A.1.8) family. The complex is composed of two ATP-binding proteins (ModC), two transmembrane proteins (ModB) and a solute-binding protein (ModA).

It is found in the cell inner membrane. It catalyses the reaction molybdate(out) + ATP + H2O = molybdate(in) + ADP + phosphate + H(+). Its function is as follows. Part of the ABC transporter complex ModABC involved in molybdenum import. Responsible for energy coupling to the transport system. This is Molybdenum import ATP-binding protein ModC from Photobacterium profundum (strain SS9).